A 273-amino-acid chain; its full sequence is 4-hydroxy-3-methylbut-2-enyl diphosphate reductase (273 aa).

Cysteine 12 contributes to the [4Fe-4S] cluster binding site. Residues histidine 36 and histidine 70 each contribute to the (2E)-4-hydroxy-3-methylbut-2-enyl diphosphate site. The dimethylallyl diphosphate site is built by histidine 36 and histidine 70. Residues histidine 36 and histidine 70 each contribute to the isopentenyl diphosphate site. Position 92 (cysteine 92) interacts with [4Fe-4S] cluster. Histidine 120 contacts (2E)-4-hydroxy-3-methylbut-2-enyl diphosphate. Histidine 120 contributes to the dimethylallyl diphosphate binding site. Histidine 120 provides a ligand contact to isopentenyl diphosphate. Residue glutamate 122 is the Proton donor of the active site. Threonine 157 serves as a coordination point for (2E)-4-hydroxy-3-methylbut-2-enyl diphosphate. Cysteine 185 lines the [4Fe-4S] cluster pocket. 4 residues coordinate (2E)-4-hydroxy-3-methylbut-2-enyl diphosphate: serine 213, serine 214, asparagine 215, and serine 257. Dimethylallyl diphosphate-binding residues include serine 213, serine 214, asparagine 215, and serine 257. Isopentenyl diphosphate contacts are provided by serine 213, serine 214, asparagine 215, and serine 257.

This sequence belongs to the IspH family. Requires [4Fe-4S] cluster as cofactor.

It catalyses the reaction isopentenyl diphosphate + 2 oxidized [2Fe-2S]-[ferredoxin] + H2O = (2E)-4-hydroxy-3-methylbut-2-enyl diphosphate + 2 reduced [2Fe-2S]-[ferredoxin] + 2 H(+). The catalysed reaction is dimethylallyl diphosphate + 2 oxidized [2Fe-2S]-[ferredoxin] + H2O = (2E)-4-hydroxy-3-methylbut-2-enyl diphosphate + 2 reduced [2Fe-2S]-[ferredoxin] + 2 H(+). Its pathway is isoprenoid biosynthesis; dimethylallyl diphosphate biosynthesis; dimethylallyl diphosphate from (2E)-4-hydroxy-3-methylbutenyl diphosphate: step 1/1. The protein operates within isoprenoid biosynthesis; isopentenyl diphosphate biosynthesis via DXP pathway; isopentenyl diphosphate from 1-deoxy-D-xylulose 5-phosphate: step 6/6. Catalyzes the conversion of 1-hydroxy-2-methyl-2-(E)-butenyl 4-diphosphate (HMBPP) into a mixture of isopentenyl diphosphate (IPP) and dimethylallyl diphosphate (DMAPP). Acts in the terminal step of the DOXP/MEP pathway for isoprenoid precursor biosynthesis. This chain is 4-hydroxy-3-methylbut-2-enyl diphosphate reductase, found in Helicobacter hepaticus (strain ATCC 51449 / 3B1).